The following is a 272-amino-acid chain: Acetyl-coenzyme A carboxylase carboxyl transferase subunit alpha (272 aa).

Residues 1 to 248 enclose the CoA carboxyltransferase C-terminal domain; the sequence is MDKDFMKINV…KKTIVDSLLE (248 aa).

The protein belongs to the AccA family. In terms of assembly, acetyl-CoA carboxylase is a heterohexamer composed of biotin carboxyl carrier protein (AccB), biotin carboxylase (AccC) and two subunits each of ACCase subunit alpha (AccA) and ACCase subunit beta (AccD).

It localises to the cytoplasm. It catalyses the reaction N(6)-carboxybiotinyl-L-lysyl-[protein] + acetyl-CoA = N(6)-biotinyl-L-lysyl-[protein] + malonyl-CoA. It functions in the pathway lipid metabolism; malonyl-CoA biosynthesis; malonyl-CoA from acetyl-CoA: step 1/1. In terms of biological role, component of the acetyl coenzyme A carboxylase (ACC) complex. First, biotin carboxylase catalyzes the carboxylation of biotin on its carrier protein (BCCP) and then the CO(2) group is transferred by the carboxyltransferase to acetyl-CoA to form malonyl-CoA. This is Acetyl-coenzyme A carboxylase carboxyl transferase subunit alpha from Clostridium beijerinckii (strain ATCC 51743 / NCIMB 8052) (Clostridium acetobutylicum).